We begin with the raw amino-acid sequence, 474 residues long: Ribosomal protein uS12 methylthiotransferase RimO (474 aa).

Residues Asn37–Pro147 enclose the MTTase N-terminal domain. Residues Cys46, Cys82, Cys111, Cys179, Cys183, and Cys186 each coordinate [4Fe-4S] cluster. A Radical SAM core domain is found at Leu165–Glu402. The 67-residue stretch at Ala405–Ala471 folds into the TRAM domain.

This sequence belongs to the methylthiotransferase family. RimO subfamily. [4Fe-4S] cluster serves as cofactor.

The protein localises to the cytoplasm. The enzyme catalyses L-aspartate(89)-[ribosomal protein uS12]-hydrogen + (sulfur carrier)-SH + AH2 + 2 S-adenosyl-L-methionine = 3-methylsulfanyl-L-aspartate(89)-[ribosomal protein uS12]-hydrogen + (sulfur carrier)-H + 5'-deoxyadenosine + L-methionine + A + S-adenosyl-L-homocysteine + 2 H(+). In terms of biological role, catalyzes the methylthiolation of an aspartic acid residue of ribosomal protein uS12. In Shewanella amazonensis (strain ATCC BAA-1098 / SB2B), this protein is Ribosomal protein uS12 methylthiotransferase RimO.